Here is a 95-residue protein sequence, read N- to C-terminus: Suppressor of silencing 2b (95 aa).

The interval 8–18 is homotetramerization; the sequence is LHEIIRKLERM. Residues 8-40 adopt a coiled-coil conformation; sequence LHEIIRKLERMNQKKQAQRKRHKLNRKERGHKS. The disordered stretch occupies residues 16–49; sequence ERMNQKKQAQRKRHKLNRKERGHKSPSEQRRSEL. The span at 23 to 37 shows a compositional bias: basic residues; the sequence is QAQRKRHKLNRKERG. The short motif at 26-30 is the Nuclear localization signal element; that stretch reads RKRHK. The segment covering 38–49 has biased composition (basic and acidic residues); sequence HKSPSEQRRSEL.

This sequence belongs to the cucumovirus/ilarvirus protein 2b family. In terms of assembly, homodimer. Homotetramer (dimer of dimers).

It localises to the host nucleus. Its function is as follows. Acts as a suppressor of RNA-mediated gene silencing, also known as post-transcriptional gene silencing (PTGS), a mechanism of plant viral defense that limits the accumulation of viral RNAs. Forms a homodimer to measure siRNA duplex in a length-preference mode. Binds to both siRNA duplexes (19bp) and long siRNA duplexes (30bp). This chain is Suppressor of silencing 2b, found in Canna (Florist's daisy).